The following is a 210-amino-acid chain: Ribosomal RNA large subunit methyltransferase E (210 aa).

The S-adenosyl-L-methionine site is built by G64, W66, D84, D100, and D125. K165 serves as the catalytic Proton acceptor.

Belongs to the class I-like SAM-binding methyltransferase superfamily. RNA methyltransferase RlmE family.

It localises to the cytoplasm. The enzyme catalyses uridine(2552) in 23S rRNA + S-adenosyl-L-methionine = 2'-O-methyluridine(2552) in 23S rRNA + S-adenosyl-L-homocysteine + H(+). Functionally, specifically methylates the uridine in position 2552 of 23S rRNA at the 2'-O position of the ribose in the fully assembled 50S ribosomal subunit. The chain is Ribosomal RNA large subunit methyltransferase E from Chromohalobacter salexigens (strain ATCC BAA-138 / DSM 3043 / CIP 106854 / NCIMB 13768 / 1H11).